The following is a 475-amino-acid chain: Ribulose bisphosphate carboxylase large chain (475 aa).

Residues 1-2 (MS) constitute a propeptide that is removed on maturation. Pro3 carries the N-acetylproline modification. An N6,N6,N6-trimethyllysine modification is found at Lys14. Residues Asn123 and Thr173 each coordinate substrate. The active-site Proton acceptor is Lys175. Lys177 provides a ligand contact to substrate. Residues Lys201, Asp203, and Glu204 each coordinate Mg(2+). Lys201 is subject to N6-carboxylysine. Catalysis depends on His294, which acts as the Proton acceptor. 3 residues coordinate substrate: Arg295, His327, and Ser379.

This sequence belongs to the RuBisCO large chain family. Type I subfamily. As to quaternary structure, heterohexadecamer of 8 large chains and 8 small chains; disulfide-linked. The disulfide link is formed within the large subunit homodimers. Mg(2+) is required as a cofactor. The disulfide bond which can form in the large chain dimeric partners within the hexadecamer appears to be associated with oxidative stress and protein turnover.

The protein resides in the plastid. It is found in the chloroplast. The catalysed reaction is 2 (2R)-3-phosphoglycerate + 2 H(+) = D-ribulose 1,5-bisphosphate + CO2 + H2O. It carries out the reaction D-ribulose 1,5-bisphosphate + O2 = 2-phosphoglycolate + (2R)-3-phosphoglycerate + 2 H(+). In terms of biological role, ruBisCO catalyzes two reactions: the carboxylation of D-ribulose 1,5-bisphosphate, the primary event in carbon dioxide fixation, as well as the oxidative fragmentation of the pentose substrate in the photorespiration process. Both reactions occur simultaneously and in competition at the same active site. The polypeptide is Ribulose bisphosphate carboxylase large chain (Carica papaya (Papaya)).